Reading from the N-terminus, the 329-residue chain is GTPase Obg (329 aa).

The Obg domain occupies 1-159 (MQFIDQAIID…WSLQLELKLL (159 aa)). One can recognise an OBG-type G domain in the interval 160–328 (AEVGIIGLPN…LLSSIWYELG (169 aa)). Residues 166 to 173 (GLPNAGKS), 191 to 195 (FTTLI), 213 to 216 (DIPG), 280 to 283 (NKKE), and 309 to 311 (SAV) each bind ATP. Mg(2+) contacts are provided by serine 173 and threonine 193.

It belongs to the TRAFAC class OBG-HflX-like GTPase superfamily. OBG GTPase family. As to quaternary structure, monomer. It depends on Mg(2+) as a cofactor.

It is found in the cytoplasm. Its function is as follows. An essential GTPase which binds GTP, GDP and possibly (p)ppGpp with moderate affinity, with high nucleotide exchange rates and a fairly low GTP hydrolysis rate. Plays a role in control of the cell cycle, stress response, ribosome biogenesis and in those bacteria that undergo differentiation, in morphogenesis control. The protein is GTPase Obg of Prochlorococcus marinus (strain NATL1A).